The chain runs to 456 residues: Exodeoxyribonuclease 7 large subunit (456 aa).

Belongs to the XseA family. As to quaternary structure, heterooligomer composed of large and small subunits.

Its subcellular location is the cytoplasm. It carries out the reaction Exonucleolytic cleavage in either 5'- to 3'- or 3'- to 5'-direction to yield nucleoside 5'-phosphates.. Its function is as follows. Bidirectionally degrades single-stranded DNA into large acid-insoluble oligonucleotides, which are then degraded further into small acid-soluble oligonucleotides. In Erwinia tasmaniensis (strain DSM 17950 / CFBP 7177 / CIP 109463 / NCPPB 4357 / Et1/99), this protein is Exodeoxyribonuclease 7 large subunit.